We begin with the raw amino-acid sequence, 191 residues long: Protein DMP10 (191 aa).

4 consecutive transmembrane segments (helical) span residues 15 to 35 (FANLLPTGTALIFETLLPSFS), 48 to 68 (LLTITLISFCAAACFFSSFTD), 114 to 134 (LSFVDFVHAFVSVIVFLALAV), and 158 to 178 (LMIKYFAVMVLTMASFFFAIF).

This sequence belongs to the plant DMP1 protein family. As to expression, restricted to flowers.

The protein resides in the membrane. In terms of biological role, involved in membrane remodeling. This Arabidopsis thaliana (Mouse-ear cress) protein is Protein DMP10.